The primary structure comprises 234 residues: Leucyl/phenylalanyl-tRNA--protein transferase (234 aa).

Belongs to the L/F-transferase family.

It localises to the cytoplasm. The enzyme catalyses N-terminal L-lysyl-[protein] + L-leucyl-tRNA(Leu) = N-terminal L-leucyl-L-lysyl-[protein] + tRNA(Leu) + H(+). It catalyses the reaction N-terminal L-arginyl-[protein] + L-leucyl-tRNA(Leu) = N-terminal L-leucyl-L-arginyl-[protein] + tRNA(Leu) + H(+). The catalysed reaction is L-phenylalanyl-tRNA(Phe) + an N-terminal L-alpha-aminoacyl-[protein] = an N-terminal L-phenylalanyl-L-alpha-aminoacyl-[protein] + tRNA(Phe). Its function is as follows. Functions in the N-end rule pathway of protein degradation where it conjugates Leu, Phe and, less efficiently, Met from aminoacyl-tRNAs to the N-termini of proteins containing an N-terminal arginine or lysine. This chain is Leucyl/phenylalanyl-tRNA--protein transferase, found in Klebsiella pneumoniae (strain 342).